We begin with the raw amino-acid sequence, 388 residues long: ATP phosphoribosyltransferase regulatory subunit (388 aa).

This sequence belongs to the class-II aminoacyl-tRNA synthetase family. HisZ subfamily. In terms of assembly, heteromultimer composed of HisG and HisZ subunits.

The protein resides in the cytoplasm. Its pathway is amino-acid biosynthesis; L-histidine biosynthesis; L-histidine from 5-phospho-alpha-D-ribose 1-diphosphate: step 1/9. Required for the first step of histidine biosynthesis. May allow the feedback regulation of ATP phosphoribosyltransferase activity by histidine. This Acinetobacter baumannii (strain AB307-0294) protein is ATP phosphoribosyltransferase regulatory subunit.